The following is a 370-amino-acid chain: Succinoglycan biosynthesis protein ExoH (370 aa).

10 consecutive transmembrane segments (helical) span residues 14–34 (ILLI…WSPF), 46–66 (VFLG…ISGY), 88–108 (TVLL…YAIQ), 144–164 (LYFL…ALLV), 170–190 (VTLL…IFLK), 193–213 (ILFG…IKML), 216–236 (FAAP…VGLY), 244–264 (LWLD…SWAI), 282–302 (GLSF…WMIW), and 307–327 (LSYY…ILVA). Positions 350–370 (AKRMATQPPQGAQAGYSPQQR) are disordered.

It belongs to the acyltransferase 3 family.

The protein localises to the cell membrane. It functions in the pathway glycan metabolism; exopolysaccharide biosynthesis. Its function is as follows. Required for the succinyl modification of the seventh sugar (glucose) of the octasaccharide subunit of succinoglycan (EPS I). This is Succinoglycan biosynthesis protein ExoH (exoH) from Rhizobium meliloti (strain 1021) (Ensifer meliloti).